Reading from the N-terminus, the 166-residue chain is Lipoprotein signal peptidase (166 aa).

The next 3 helical transmembrane spans lie at 12-32 (WLWLVVVVLIIDLGSKYLILQ), 70-90 (WFFAGIAIGICVILLVMMYRS), and 102-122 (ALIIGGALGNLFDRLWHGFVV). Residues aspartate 123 and aspartate 141 contribute to the active site. The helical transmembrane segment at 137 to 157 (FNLADSAICIGAALIVLEGFL) threads the bilayer.

The protein belongs to the peptidase A8 family.

It localises to the cell inner membrane. It carries out the reaction Release of signal peptides from bacterial membrane prolipoproteins. Hydrolyzes -Xaa-Yaa-Zaa-|-(S,diacylglyceryl)Cys-, in which Xaa is hydrophobic (preferably Leu), and Yaa (Ala or Ser) and Zaa (Gly or Ala) have small, neutral side chains.. It participates in protein modification; lipoprotein biosynthesis (signal peptide cleavage). Functionally, this protein specifically catalyzes the removal of signal peptides from prolipoproteins. In Salmonella choleraesuis (strain SC-B67), this protein is Lipoprotein signal peptidase.